The chain runs to 32 residues: Giant hemoglobin AIV chain (32 aa).

The protein belongs to the globin family. Giant hemoglobin is composed of four heme-containing chains (AI to AIV), and two linker chains (AV and AVI).

The chain is Giant hemoglobin AIV chain from Lamellibrachia sp. (Deep-sea giant tube worm).